We begin with the raw amino-acid sequence, 273 residues long: Putative ankyrin repeat protein RBE_0317 (273 aa).

ANK repeat units follow at residues 31–60 (LGKE…DFYS), 93–123 (NGNT…EVNT), 127–157 (GGNS…NVNE), 161–191 (YGDT…DVNE), and 195–225 (QGET…DTKQ).

In Rickettsia bellii (strain RML369-C), this protein is Putative ankyrin repeat protein RBE_0317.